A 252-amino-acid polypeptide reads, in one-letter code: Phosphate import ATP-binding protein PstB 1 (252 aa).

Positions 6 to 247 constitute an ABC transporter domain; sequence LKVNDLSVYY…PQKQETEDYI (242 aa). Position 38–45 (38–45) interacts with ATP; the sequence is GPSGSGKS.

Belongs to the ABC transporter superfamily. Phosphate importer (TC 3.A.1.7) family. In terms of assembly, the complex is composed of two ATP-binding proteins (PstB), two transmembrane proteins (PstC and PstA) and a solute-binding protein (PstS).

The protein resides in the cell membrane. The catalysed reaction is phosphate(out) + ATP + H2O = ADP + 2 phosphate(in) + H(+). Its function is as follows. Part of the ABC transporter complex PstSACB involved in phosphate import. Responsible for energy coupling to the transport system. The chain is Phosphate import ATP-binding protein PstB 1 from Streptococcus mutans serotype c (strain ATCC 700610 / UA159).